We begin with the raw amino-acid sequence, 265 residues long: tRNA (guanine-N(7)-)-methyltransferase (265 aa).

Residues 1-40 form a disordered region; that stretch reads MIHDDDPNAPGAPHDDDATAAPASATRAAPAAGDDDDANP. A compositionally biased stretch (low complexity) spans 19–32; sequence TAAPASATRAAPAA. S-adenosyl-L-methionine-binding residues include glutamate 95, glutamate 120, aspartate 147, and aspartate 170. The active site involves aspartate 170. Residues lysine 174, aspartate 206, and 241–244 contribute to the substrate site; that span reads TKFE.

It belongs to the class I-like SAM-binding methyltransferase superfamily. TrmB family.

The enzyme catalyses guanosine(46) in tRNA + S-adenosyl-L-methionine = N(7)-methylguanosine(46) in tRNA + S-adenosyl-L-homocysteine. It functions in the pathway tRNA modification; N(7)-methylguanine-tRNA biosynthesis. Functionally, catalyzes the formation of N(7)-methylguanine at position 46 (m7G46) in tRNA. The sequence is that of tRNA (guanine-N(7)-)-methyltransferase from Burkholderia pseudomallei (strain 1710b).